The following is a 470-amino-acid chain: ATP synthase subunit beta (470 aa).

158–165 (GGAGVGKT) lines the ATP pocket.

It belongs to the ATPase alpha/beta chains family. F-type ATPases have 2 components, CF(1) - the catalytic core - and CF(0) - the membrane proton channel. CF(1) has five subunits: alpha(3), beta(3), gamma(1), delta(1), epsilon(1). CF(0) has three main subunits: a(1), b(2) and c(9-12). The alpha and beta chains form an alternating ring which encloses part of the gamma chain. CF(1) is attached to CF(0) by a central stalk formed by the gamma and epsilon chains, while a peripheral stalk is formed by the delta and b chains.

The protein resides in the cell membrane. The catalysed reaction is ATP + H2O + 4 H(+)(in) = ADP + phosphate + 5 H(+)(out). Produces ATP from ADP in the presence of a proton gradient across the membrane. The catalytic sites are hosted primarily by the beta subunits. This is ATP synthase subunit beta from Shouchella clausii (strain KSM-K16) (Alkalihalobacillus clausii).